Here is a 451-residue protein sequence, read N- to C-terminus: UPF0210 protein NMA1908 (451 aa).

It belongs to the UPF0210 family. In terms of assembly, homodimer.

In Neisseria meningitidis serogroup A / serotype 4A (strain DSM 15465 / Z2491), this protein is UPF0210 protein NMA1908.